Here is a 396-residue protein sequence, read N- to C-terminus: Probable peptidoglycan glycosyltransferase FtsW (396 aa).

Helical transmembrane passes span 17-37 (FCDGWLLVATLSLMLIGWVMV), 61-81 (VFVLCSMVVALLVLRIPMAWW), 83-103 (ANGPLLLLVGLALLALVLVAG), 117-137 (GIPLNLQASEIAKLCLIVYLA), 159-179 (MVMAVMGVLLIFEPDYGAVVV), 198-218 (FLLLMGLVAALGAALAIAEPY), 274-294 (FVFAVLAEELGMIGAVAVIGL), 316-336 (FAAYLCYGIALVIGAQAFINI), and 350-370 (LPLLSYGGSSLVISAVMVGML).

The protein belongs to the SEDS family. FtsW subfamily.

Its subcellular location is the cell inner membrane. The enzyme catalyses [GlcNAc-(1-&gt;4)-Mur2Ac(oyl-L-Ala-gamma-D-Glu-L-Lys-D-Ala-D-Ala)](n)-di-trans,octa-cis-undecaprenyl diphosphate + beta-D-GlcNAc-(1-&gt;4)-Mur2Ac(oyl-L-Ala-gamma-D-Glu-L-Lys-D-Ala-D-Ala)-di-trans,octa-cis-undecaprenyl diphosphate = [GlcNAc-(1-&gt;4)-Mur2Ac(oyl-L-Ala-gamma-D-Glu-L-Lys-D-Ala-D-Ala)](n+1)-di-trans,octa-cis-undecaprenyl diphosphate + di-trans,octa-cis-undecaprenyl diphosphate + H(+). It participates in cell wall biogenesis; peptidoglycan biosynthesis. Its function is as follows. Peptidoglycan polymerase that is essential for cell division. In Halomonas elongata (strain ATCC 33173 / DSM 2581 / NBRC 15536 / NCIMB 2198 / 1H9), this protein is Probable peptidoglycan glycosyltransferase FtsW.